The following is a 297-amino-acid chain: 4-hydroxy-tetrahydrodipicolinate synthase (297 aa).

Residue Thr49 participates in pyruvate binding. Tyr137 (proton donor/acceptor) is an active-site residue. Lys166 functions as the Schiff-base intermediate with substrate in the catalytic mechanism. Ile208 lines the pyruvate pocket.

The protein belongs to the DapA family. In terms of assembly, homotetramer; dimer of dimers.

It is found in the cytoplasm. It catalyses the reaction L-aspartate 4-semialdehyde + pyruvate = (2S,4S)-4-hydroxy-2,3,4,5-tetrahydrodipicolinate + H2O + H(+). It participates in amino-acid biosynthesis; L-lysine biosynthesis via DAP pathway; (S)-tetrahydrodipicolinate from L-aspartate: step 3/4. Catalyzes the condensation of (S)-aspartate-beta-semialdehyde [(S)-ASA] and pyruvate to 4-hydroxy-tetrahydrodipicolinate (HTPA). This is 4-hydroxy-tetrahydrodipicolinate synthase from Parabacteroides distasonis (strain ATCC 8503 / DSM 20701 / CIP 104284 / JCM 5825 / NCTC 11152).